The following is a 229-amino-acid chain: Somatolactin (229 aa).

An N-terminal signal peptide occupies residues 1-21; that stretch reads MAALQEVLLAVLLWPVLVTIS. 3 cysteine pairs are disulfide-bonded: Cys-26–Cys-36, Cys-87–Cys-203, and Cys-220–Cys-228. Asn-143 carries N-linked (GlcNAc...) asparagine glycosylation.

Belongs to the somatotropin/prolactin family. In terms of tissue distribution, pituitary gland.

It localises to the secreted. This Tetraodon miurus (Congo puffer) protein is Somatolactin.